The following is a 587-amino-acid chain: MATATPVQQRAGSRASAPATPFSPTRLSRLQEKEELRELNDRLAVYIDKVRSLETENSALQLQVTEREEVRGRELTGLKALYETELADARRALDDTARERAKLQIELGKFKAEHDQLLLNYAKKESDLSGAQIKLREYEAALNSKDAALATALGDKKSLEGDLEDLKDQIAQLEASLSAAKKQLADETLLKVDLENRCQSLTEDLEFRKNMYEEEINETRRKHETRLVEVDSGRQIEYEYKLAQALHEMREQHDAQVRLYKEELEQTYHAKLENARLSSEMNTSTVNSARGGMMESRMRIESLSSQLSNLQKDSRACLERIQELEDMLAKERDNSRRMLSDKEREMAEIRDQMQQQLNDYEQLLDVKLALDMEISAYRKLLEGEEERLKLSPSPSSRVTVSRASSSRSVRTTRGKRKRVDVEESEASSSVSISHSASATGNVCIEEIDVDGKFIRLKNTSEQDQPMGGWEMIRKIGDTSVSYKYTSRYVLKAGQTVTVWAANAGVTASPPTDLIWKNQNSWGTGEDVKVVLKNSQGEEVAQRSTVFKTTIPEEEEEEEEEPIGVPLEEERFHQQGTPRASNKSCAIM.

Residues 1–11 are compositionally biased toward polar residues; it reads MATATPVQQRA. The interval 1–29 is disordered; that stretch reads MATATPVQQRAGSRASAPATPFSPTRLSR. Ala2 carries the post-translational modification N-acetylalanine. The interval 2–34 is head; sequence ATATPVQQRAGSRASAPATPFSPTRLSRLQEKE. Residues Thr3 and Thr5 each carry the phosphothreonine modification. The residue at position 14 (Arg14) is an Omega-N-methylarginine. The residue at position 16 (Ser16) is a Phosphoserine. The residue at position 20 (Thr20) is a Phosphothreonine. At Ser23 the chain carries Phosphoserine. Thr25 is subject to Phosphothreonine. Ser28 carries the post-translational modification Phosphoserine. The region spanning 32–388 is the IF rod domain; it reads EKEELRELND…KLLEGEEERL (357 aa). A coil 1A region spans residues 35–69; the sequence is ELRELNDRLAVYIDKVRSLETENSALQLQVTEREE. Residues 70-81 form a linker 1 region; the sequence is VRGRELTGLKAL. The coil 1B stretch occupies residues 82-215; the sequence is YETELADARR…EFRKNMYEEE (134 aa). A Glycyl lysine isopeptide (Lys-Gly) (interchain with G-Cter in SUMO2) cross-link involves residue Lys102. Residue Lys111 is modified to N6-acetyllysine. Lys123 is covalently cross-linked (Glycyl lysine isopeptide (Lys-Gly) (interchain with G-Cter in SUMO2)). Ser126 bears the Phosphoserine mark. Lys145 is covalently cross-linked (Glycyl lysine isopeptide (Lys-Gly) (interchain with G-Cter in SUMO2)). The residue at position 157 (Lys157) is an N6-acetyllysine; alternate. A Glycyl lysine isopeptide (Lys-Gly) (interchain with G-Cter in SUMO2); alternate cross-link involves residue Lys157. Ser158 is modified (phosphoserine). A Glycyl lysine isopeptide (Lys-Gly) (interchain with G-Cter in SUMO2) cross-link involves residue Lys181. Ser200 and Ser232 each carry phosphoserine. The interval 216-243 is linker 2; the sequence is INETRRKHETRLVEVDSGRQIEYEYKLA. Glycyl lysine isopeptide (Lys-Gly) (interchain with G-Cter in SUMO2) cross-links involve residues Lys241 and Lys261. Positions 244–386 are coil 2; sequence QALHEMREQH…YRKLLEGEEE (143 aa). The residue at position 271 (Lys271) is an N6-acetyllysine; alternate. Residue Lys271 forms a Glycyl lysine isopeptide (Lys-Gly) (interchain with G-Cter in SUMO2); alternate linkage. A phosphoserine mark is found at Ser278 and Ser302. A Glycyl lysine isopeptide (Lys-Gly) (interchain with G-Cter in SUMO2) cross-link involves residue Lys312. Residue Lys330 is modified to N6-acetyllysine; alternate. A Glycyl lysine isopeptide (Lys-Gly) (interchain with G-Cter in SUMO2); alternate cross-link involves residue Lys330. Phosphoserine occurs at positions 375 and 393. The interval 387–587 is tail; the sequence is RLKLSPSPSS…RASNKSCAIM (201 aa). Residues 390–409 are compositionally biased toward low complexity; that stretch reads LSPSPSSRVTVSRASSSRSV. Residues 390–432 are disordered; the sequence is LSPSPSSRVTVSRASSSRSVRTTRGKRKRVDVEESEASSSVSI. Thr399 carries O-linked (GlcNAc) threonine glycosylation. Arg413 is modified (omega-N-methylarginine). Residues 415–420 carry the Nuclear localization signal motif; it reads KRKRVD. The LTD domain occupies 430 to 546; it reads VSISHSASAT…EEVAQRSTVF (117 aa). Lys483 is modified (N6-acetyllysine). A Glycyl lysine isopeptide (Lys-Gly) (interchain with G-Cter in SUMO2) cross-link involves residue Lys532. Ser534 carries the post-translational modification Phosphoserine. Lys547 is covalently cross-linked (Glycyl lysine isopeptide (Lys-Gly) (interchain with G-Cter in SUMO2)). A disordered region spans residues 550–587; the sequence is IPEEEEEEEEEPIGVPLEEERFHQQGTPRASNKSCAIM. Residues 551 to 561 show a composition bias toward acidic residues; sequence PEEEEEEEEEP. Residues 573–587 show a composition bias toward polar residues; the sequence is QQGTPRASNKSCAIM. Thr576 bears the Phosphothreonine mark. A Cysteine methyl ester modification is found at Cys584. Cys584 carries S-farnesyl cysteine lipidation. Residues 585-587 constitute a propeptide, removed in mature form; the sequence is AIM.

Belongs to the intermediate filament family. As to quaternary structure, homodimer. Lamin dimers then assemble into dimeric head-to-tail polymers. Ultimately, two head-to-tail polymers assemble laterally into a protofilament with a uniformly shaped rod of 3.5 nm in diameter. Interacts with SPAG4 and SEPT12. Post-translationally, B-type lamins undergo a series of modifications, such as farnesylation and phosphorylation. Increased phosphorylation of the lamins occurs before envelope disintegration and probably plays a role in regulating lamin associations. Phosphorylation plays a key role in lamin organization, subcellular localization and nuclear envelope disintegration. Phosphorylation by CDK1 at Ser-23 and Ser-393 at the onset of mitosis drives lamin disassembly and nuclear envelope breakdown.

Its subcellular location is the nucleus lamina. Its function is as follows. Lamins are intermediate filament proteins that assemble into a filamentous meshwork, and which constitute the major components of the nuclear lamina, a fibrous layer on the nucleoplasmic side of the inner nuclear membrane. Lamins provide a framework for the nuclear envelope, bridging the nuclear envelope and chromatin, thereby playing an important role in nuclear assembly, chromatin organization, nuclear membrane and telomere dynamics. The structural integrity of the lamina is strictly controlled by the cell cycle, as seen by the disintegration and formation of the nuclear envelope in prophase and telophase, respectively. The polypeptide is Lamin-B1 (Lmnb1) (Rattus norvegicus (Rat)).